The sequence spans 192 residues: Xanthine phosphoribosyltransferase (192 aa).

Residues Leu-20 and Asn-27 each contribute to the xanthine site. Residue Ala-128–Ala-132 coordinates 5-phospho-alpha-D-ribose 1-diphosphate. Residue Lys-156 coordinates xanthine.

The protein belongs to the purine/pyrimidine phosphoribosyltransferase family. Xpt subfamily. Homodimer.

It localises to the cytoplasm. The enzyme catalyses XMP + diphosphate = xanthine + 5-phospho-alpha-D-ribose 1-diphosphate. Its pathway is purine metabolism; XMP biosynthesis via salvage pathway; XMP from xanthine: step 1/1. Converts the preformed base xanthine, a product of nucleic acid breakdown, to xanthosine 5'-monophosphate (XMP), so it can be reused for RNA or DNA synthesis. In Ligilactobacillus salivarius (strain UCC118) (Lactobacillus salivarius), this protein is Xanthine phosphoribosyltransferase.